Consider the following 302-residue polypeptide: Nodulation protein D 3 (302 aa).

Positions 6 to 63 (LDLNLLVALDALMIERNLTAAARSINLSQPAMSAAVRRLRSYFRDELFTMRGREFVPT) constitute an HTH lysR-type domain. Positions 23–42 (LTAAARSINLSQPAMSAAVR) form a DNA-binding region, H-T-H motif.

The protein belongs to the LysR transcriptional regulatory family.

Its function is as follows. NodD regulates the expression of the nodABCFE genes which encode other nodulation proteins. NodD is also a negative regulator of its own expression. Binds flavonoids as inducers. This Rhizobium leguminosarum bv. phaseoli protein is Nodulation protein D 3 (nodD3).